A 232-amino-acid chain; its full sequence is Heptaprenylglyceryl phosphate synthase (232 aa).

Lys12 lines the sn-glycerol 1-phosphate pocket. Mg(2+)-binding residues include Asp14 and Thr40. Sn-glycerol 1-phosphate is bound by residues 159 to 164 (YLEYSG), Gly189, and 209 to 210 (GN).

The protein belongs to the GGGP/HepGP synthase family. Group I subfamily. In terms of assembly, homodimer. Mg(2+) is required as a cofactor.

It carries out the reaction sn-glycerol 1-phosphate + all-trans-heptaprenyl diphosphate = 3-heptaprenyl-sn-glycero-1-phosphate + diphosphate. It participates in membrane lipid metabolism; glycerophospholipid metabolism. Its function is as follows. Prenyltransferase that catalyzes in vivo the transfer of the heptaprenyl moiety of heptaprenyl pyrophosphate (HepPP; 35 carbon atoms) to the C3 hydroxyl of sn-glycerol-1-phosphate (G1P), producing heptaprenylglyceryl phosphate (HepGP). This reaction is an ether-bond-formation step in the biosynthesis of archaea-type G1P-based membrane lipids found in Bacillales. The sequence is that of Heptaprenylglyceryl phosphate synthase from Shouchella clausii (strain KSM-K16) (Alkalihalobacillus clausii).